A 397-amino-acid chain; its full sequence is Elongation factor Tu (397 aa).

Residues 10 to 207 form the tr-type G domain; the sequence is KPHVNIGTIG…ACDSYIPEPE (198 aa). The segment at 19–26 is G1; that stretch reads GHIDHGKT. Position 19 to 26 (19 to 26) interacts with GTP; the sequence is GHIDHGKT. T26 contributes to the Mg(2+) binding site. A G2 region spans residues 60-64; the sequence is GITIA. A G3 region spans residues 81–84; it reads DCPG. Residues 81–85 and 136–139 contribute to the GTP site; these read DCPGH and NKCD. Positions 136-139 are G4; it reads NKCD. The G5 stretch occupies residues 174–176; that stretch reads SAL.

Belongs to the TRAFAC class translation factor GTPase superfamily. Classic translation factor GTPase family. EF-Tu/EF-1A subfamily. In terms of assembly, monomer.

Its subcellular location is the cytoplasm. The enzyme catalyses GTP + H2O = GDP + phosphate + H(+). In terms of biological role, GTP hydrolase that promotes the GTP-dependent binding of aminoacyl-tRNA to the A-site of ribosomes during protein biosynthesis. This is Elongation factor Tu from Oleidesulfovibrio alaskensis (strain ATCC BAA-1058 / DSM 17464 / G20) (Desulfovibrio alaskensis).